A 151-amino-acid polypeptide reads, in one-letter code: Ocs element-binding factor 1 (151 aa).

Residues 1-17 are compositionally biased toward polar residues; sequence MSSSSLSPTAGRTSGSD. Positions 1–47 are disordered; that stretch reads MSSSSLSPTAGRTSGSDGDSAADTHRREKRRLSNRESARRSRLRKQQ. The segment covering 22–39 has biased composition (basic and acidic residues); the sequence is ADTHRREKRRLSNRESAR. The 64-residue stretch at 24–87 folds into the bZIP domain; sequence THRREKRRLS…TRVEQENTVL (64 aa). The tract at residues 26-45 is basic motif; that stretch reads RREKRRLSNRESARRSRLRK. The tract at residues 52–59 is leucine-zipper; it reads LVQEVARL.

This sequence belongs to the bZIP family. In terms of tissue distribution, roots and shoots of young plants, and basal portion of leaves.

Its subcellular location is the nucleus. Functionally, may contribute to developmentally specific patterns of gene expression. Binds specifically to ocs elements which are transcriptional enhancer found in the promoters of several plant genes. OCSBF-1 is able to bind to a site within each half of the ocs element as well as to animal AP-1 and CREB sites. The sequence is that of Ocs element-binding factor 1 (OBF1) from Zea mays (Maize).